We begin with the raw amino-acid sequence, 628 residues long: Hemocyanin II (628 aa).

Threonine 1 is subject to Blocked amino end (Thr); partial. Cu cation-binding residues include histidine 173, histidine 177, histidine 204, histidine 324, histidine 328, and histidine 364. N-linked (GlcNAc...) asparagine glycosylation occurs at asparagine 449. Disulfide bonds link cysteine 534/cysteine 576 and cysteine 536/cysteine 583.

The protein belongs to the tyrosinase family. Hemocyanin subfamily. Hexamer or a multiple thereof. In terms of tissue distribution, hemolymph.

It is found in the secreted. The protein localises to the extracellular space. Its function is as follows. Hemocyanins are copper-containing oxygen carriers occurring freely dissolved in the hemolymph of many mollusks and arthropods. This chain is Hemocyanin II, found in Limulus polyphemus (Atlantic horseshoe crab).